The chain runs to 42 residues: Envelope protein P10 (42 aa).

Residues 20-40 (TTAAKIAVVYALVGLVGGLLL) traverse the membrane as a helical segment.

The protein resides in the virion membrane. Involved in cell lysis. The chain is Envelope protein P10 (P10) from Pseudomonas savastanoi pv. phaseolicola (Pseudomonas syringae pv. phaseolicola).